Here is a 67-residue protein sequence, read N- to C-terminus: Putative sodium channel alpha-toxin Acra7 (67 aa).

Residues 2–66 enclose the LCN-type CS-alpha/beta domain; sequence RDGYIVKPTN…PIKDPNQDCT (65 aa). Cystine bridges form between Cys-12/Cys-65, Cys-16/Cys-37, Cys-23/Cys-47, and Cys-27/Cys-49. Position 67 (Arg-67) is a propeptide, removed by a carboxypeptidase.

This sequence belongs to the long (4 C-C) scorpion toxin superfamily. Sodium channel inhibitor family. Alpha subfamily. Expressed by the venom gland.

The protein resides in the secreted. Alpha toxins bind voltage-independently at site-3 of sodium channels (Nav) and inhibit the inactivation of the activated channels, thereby blocking neuronal transmission. The sequence is that of Putative sodium channel alpha-toxin Acra7 from Androctonus crassicauda (Arabian fat-tailed scorpion).